The primary structure comprises 695 residues: Follicle-stimulating hormone receptor (695 aa).

The first 17 residues, 1–17 (MALFLVALLAFLSLGSG), serve as a signal peptide directing secretion. 2 disulfides stabilise this stretch: Cys-18/Cys-25 and Cys-23/Cys-32. Residues 18-46 (CHHRLCHCSNGVFLCQDSKVTEMPSDLPR) form the LRRNT domain. At 18–366 (CHHRLCHCSN…EDIMGYDILR (349 aa)) the chain is on the extracellular side. 9 LRR repeats span residues 48 to 70 (AVELRFVLTKLRVIPEGAFSGFG), 71 to 93 (DLEKIEISQNDVLEVIEANVFSN), 96 to 118 (KLHEIRIEKANNLLYIDPDAFQN), 121 to 142 (NLRYLLISNTGIKHLPAVHKIQ), 143 to 167 (SLQKVLLDIQDNINIHTVERNSFMG), 171 to 192 (ESMIVWLSKNGIQEIHNCAFNG), 194 to 216 (QLDELNLSDNSNLEELPNDVFQG), 219 to 239 (GPVILDISRTRIRSLPSYGLE), and 240 to 262 (NLKKLRAKSTYHLKKLPSLEKFV). N-linked (GlcNAc...) asparagine glycosylation is found at Asn-191 and Asn-199. 4 disulfide bridges follow: Cys-275–Cys-346, Cys-276–Cys-292, Cys-276–Cys-356, and Cys-292–Cys-338. A glycan (N-linked (GlcNAc...) asparagine) is linked at Asn-293. Tyr-335 carries the post-translational modification Sulfotyrosine. The helical transmembrane segment at 367–387 (VLIWFISILAITGNILVLVIL) threads the bilayer. Topologically, residues 388–398 (ITSQYKLTVPR) are cytoplasmic. The chain crosses the membrane as a helical span at residues 399–421 (FLMCNLAFADLCIGIYLLLIASV). Over 422-443 (DVHTKSQYHNYAIDWQTGAGCD) the chain is Extracellular. Cys-442 and Cys-517 are joined by a disulfide. A helical transmembrane segment spans residues 444-465 (AAGFFTVFASELSVYTLTAITL). The Cytoplasmic segment spans residues 466 to 485 (ERWHTITHAMQLECKVHVRH). A helical transmembrane segment spans residues 486-508 (AASIMLVGWVFAFAVALFPIFGI). Residues 509-528 (SSYMKVSICLPMDIDSPLSQ) are Extracellular-facing. The helical transmembrane segment at 529–550 (LYVMSLLVLNVLAFVVICGCYT) threads the bilayer. Residues 551–573 (HIYLTVRNPNITSSSSDTKIAKR) lie on the Cytoplasmic side of the membrane. A helical membrane pass occupies residues 574-597 (MAMLIFTDFLCMAPISFFAISASL). Residues 598–608 (KVPLITVSKSK) lie on the Extracellular side of the membrane. A helical membrane pass occupies residues 609 to 630 (ILLVLFYPINSCANPFLYAIFT). The Cytoplasmic segment spans residues 631–695 (RNFRRDFFIL…LIPLRHLAKN (65 aa)).

This sequence belongs to the G-protein coupled receptor 1 family. FSH/LSH/TSH subfamily. In terms of assembly, homotrimer. Functions as a homotrimer binding the FSH hormone heterodimer composed of CGA and FSHB. Interacts with ARRB2. Interacts with APPL2; interaction is independent of follicle stimulating hormone stimulation. In terms of processing, N-glycosylated; indirectly required for FSH-binding, possibly via a conformational change that allows high affinity binding of hormone. Post-translationally, sulfated. Isoform FSH-R3 is expressed in ovary and testis, but not in kidney (at protein level).

It localises to the cell membrane. Functionally, g protein-coupled receptor for follitropin, the follicle-stimulating hormone. The activity of isoform FSH-R1 is mediated by G proteins which activate adenylate cyclase. Isoform FSH-R2 and isoform FSH-R3 also bind FSH, but this does not result in activation of adenylate cyclase. Isoform FSH-R3 may be involved in calcium signaling. Through cAMP production activates the downstream PI3K-AKT and ERK1/ERK2 signaling pathways. This chain is Follicle-stimulating hormone receptor (FSHR), found in Ovis aries (Sheep).